Reading from the N-terminus, the 98-residue chain is Cell division protein FtsB (98 aa).

Residues 1–3 (MKR) lie on the Cytoplasmic side of the membrane. A helical transmembrane segment spans residues 4-21 (LLFVLIALLAMLQYRLWL). The Periplasmic segment spans residues 22-98 (GDKSLADSFH…GGERGGVPEN (77 aa)). Positions 31–74 (HLQEQIKLQQQSNAQLVARNQVLREEISDLRSGTEALEERARNE) form a coiled coil.

This sequence belongs to the FtsB family. In terms of assembly, part of a complex composed of FtsB, FtsL and FtsQ.

The protein localises to the cell inner membrane. Its function is as follows. Essential cell division protein. May link together the upstream cell division proteins, which are predominantly cytoplasmic, with the downstream cell division proteins, which are predominantly periplasmic. This chain is Cell division protein FtsB, found in Shewanella pealeana (strain ATCC 700345 / ANG-SQ1).